The primary structure comprises 83 residues: MKVSVLITLAVLGVMFVWTSAAELEERGSDQPAWLKSLERIFQSEERDCRALYGGCTKDEDCCKHLACRRTLPTYCAWDLTFP.

The N-terminal stretch at 1 to 21 (MKVSVLITLAVLGVMFVWTSA) is a signal peptide. Residues 22 to 47 (AELEERGSDQPAWLKSLERIFQSEER) constitute a propeptide that is removed on maturation. Disulfide bonds link Cys-49–Cys-63, Cys-56–Cys-68, and Cys-62–Cys-76.

This sequence belongs to the neurotoxin 10 (Hwtx-1) family. 40 (Jztx-35) subfamily. As to expression, expressed by the venom gland.

The protein localises to the secreted. Probable ion channel inhibitor. This chain is U20-theraphotoxin-Cg1a 1, found in Chilobrachys guangxiensis (Chinese earth tiger tarantula).